A 595-amino-acid chain; its full sequence is Putative laccase-18 (595 aa).

Residues 1 to 29 form the signal peptide; that stretch reads MEKLSTAASLFGVVVAATALAMAVVGGEA. Plastocyanin-like domains follow at residues 37–153 and 162–316; these read MVHE…PRDG and KDVP…YTGA. Asparagine 42 and asparagine 48 each carry an N-linked (GlcNAc...) asparagine glycan. 2 residues coordinate Cu cation: histidine 87 and histidine 89. The N-linked (GlcNAc...) asparagine glycan is linked to asparagine 121. Cu cation contacts are provided by histidine 132 and histidine 134. N-linked (GlcNAc...) asparagine glycans are attached at residues asparagine 206, asparagine 345, asparagine 382, asparagine 402, asparagine 409, asparagine 439, and asparagine 470. Residues 429–571 form the Plastocyanin-like 3 domain; the sequence is DFPVRPPRPF…ATAFIVEDGP (143 aa). Cu cation is bound by residues asparagine 488, histidine 491, histidine 493, histidine 550, cysteine 551, histidine 552, histidine 556, and methionine 561. Residues 570–595 are disordered; that stretch reads GPTPETSLPPPPPEFKRCGTNGLSQP.

It belongs to the multicopper oxidase family. It depends on Cu cation as a cofactor.

The protein resides in the secreted. Its subcellular location is the extracellular space. It localises to the apoplast. It catalyses the reaction 4 hydroquinone + O2 = 4 benzosemiquinone + 2 H2O. Its function is as follows. Lignin degradation and detoxification of lignin-derived products. This is Putative laccase-18 (LAC18) from Oryza sativa subsp. indica (Rice).